The primary structure comprises 207 residues: Large ribosomal subunit protein bL25 (207 aa).

Residues 171–207 are disordered; sequence EEETVVTVSAPRAEEEPTTTEAPEPEAVHGNDEEPVE. Residues 196-207 show a composition bias toward basic and acidic residues; that stretch reads EAVHGNDEEPVE.

It belongs to the bacterial ribosomal protein bL25 family. CTC subfamily. Part of the 50S ribosomal subunit; part of the 5S rRNA/L5/L18/L25 subcomplex. Contacts the 5S rRNA. Binds to the 5S rRNA independently of L5 and L18.

Its function is as follows. This is one of the proteins that binds to the 5S RNA in the ribosome where it forms part of the central protuberance. The chain is Large ribosomal subunit protein bL25 from Listeria innocua serovar 6a (strain ATCC BAA-680 / CLIP 11262).